Consider the following 1010-residue polypeptide: Polyhomeotic-like protein 1 (1010 aa).

Over residues 1–22 the composition is skewed to low complexity; it reads METESEQNSSSTNGSSSSGASS. Disordered stretches follow at residues 1 to 25, 212 to 243, 259 to 312, 444 to 506, 565 to 588, and 646 to 678; these read METE…SRPQ, NQQA…LSQT, GQSL…TGVV, QQQG…SKPP, GAVQ…PGAL, and KRKA…SPKV. Residues 212–228 show a composition bias toward polar residues; that stretch reads NQQASAQGPQMPGSTQK. Positions 279-292 are enriched in gly residues; it reads MGPGGGGQAPGGLG. Over residues 453–463 the composition is skewed to pro residues; it reads PQPPQVPPTQQ. Over residues 464–480 the composition is skewed to low complexity; the sequence is VPPSQSQQQAQTLVVQP. Positions 488-500 are enriched in pro residues; that stretch reads TLPPEPTSKPPIP. Low complexity predominate over residues 575–587; it reads ASSPPSSQAAPGA. A Phosphoserine modification is found at S651. A Glycyl lysine isopeptide (Lys-Gly) (interchain with G-Cter in SUMO2) cross-link involves residue K769. Positions 772 to 794 are disordered; sequence QAGLPTGLNESQPSGPLGGDSPS. The FCS-type zinc-finger motif lies at 797–831; the sequence is LEKKANLLKCEYCGKYAPAEQFRGSKRFCSMTCAK. 4 residues coordinate Zn(2+): C806, C809, C825, and C829. The disordered stretch occupies residues 854–928; it reads ASYARVRRRG…LGNTITTPST (75 aa). S904 is modified (phosphoserine). T928 is modified (phosphothreonine). One can recognise an SAM domain in the interval 946–1010; the sequence is WSVEEVYEFI…CAKINVLKET (65 aa).

Homodimer. Component of a PRC1-like complex. Interacts with the SAM domain of SCMH1 via its SAM domain in vitro. Interacts with RNF2 and CBX7. Interacts with PHC2. Interacts with BMI1. As to expression, highly expressed in testis with lower levels in most other tissues. Expressed in embryonic stem cells.

It is found in the nucleus. Functionally, component of a Polycomb group (PcG) multiprotein PRC1-like complex, a complex class required to maintain the transcriptionally repressive state of many genes, including Hox genes, throughout development. PcG PRC1 complex acts via chromatin remodeling and modification of histones; it mediates monoubiquitination of histone H2A 'Lys-119', rendering chromatin heritably changed in its expressibility. Required for proper control of cellular levels of GMNN expression. This is Polyhomeotic-like protein 1 from Mus musculus (Mouse).